Reading from the N-terminus, the 319-residue chain is Ornithine carbamoyltransferase (319 aa).

Carbamoyl phosphate contacts are provided by residues 55–58 (STRT), glutamine 82, arginine 106, and 133–136 (HPCQ). L-ornithine is bound by residues asparagine 171, aspartate 234, and 238–239 (SM). Carbamoyl phosphate is bound by residues 274-275 (CL) and arginine 302.

It belongs to the aspartate/ornithine carbamoyltransferase superfamily. OTCase family.

The protein resides in the cytoplasm. The enzyme catalyses carbamoyl phosphate + L-ornithine = L-citrulline + phosphate + H(+). It participates in amino-acid biosynthesis; L-arginine biosynthesis; L-arginine from L-ornithine and carbamoyl phosphate: step 1/3. Functionally, reversibly catalyzes the transfer of the carbamoyl group from carbamoyl phosphate (CP) to the N(epsilon) atom of ornithine (ORN) to produce L-citrulline. The chain is Ornithine carbamoyltransferase (argF) from Corynebacterium glutamicum (strain ATCC 13032 / DSM 20300 / JCM 1318 / BCRC 11384 / CCUG 27702 / LMG 3730 / NBRC 12168 / NCIMB 10025 / NRRL B-2784 / 534).